A 274-amino-acid polypeptide reads, in one-letter code: NH(3)-dependent NAD(+) synthetase (274 aa).

46-53 (GISGGQDS) is a binding site for ATP. Residue aspartate 52 coordinates Mg(2+). Arginine 140 contacts deamido-NAD(+). An ATP-binding site is contributed by threonine 160. Glutamate 165 contributes to the Mg(2+) binding site. Deamido-NAD(+)-binding residues include lysine 173 and aspartate 180. ATP contacts are provided by lysine 189 and threonine 211. Position 260-261 (260-261 (HK)) interacts with deamido-NAD(+).

This sequence belongs to the NAD synthetase family. In terms of assembly, homodimer.

The enzyme catalyses deamido-NAD(+) + NH4(+) + ATP = AMP + diphosphate + NAD(+) + H(+). The protein operates within cofactor biosynthesis; NAD(+) biosynthesis; NAD(+) from deamido-NAD(+) (ammonia route): step 1/1. Functionally, catalyzes the ATP-dependent amidation of deamido-NAD to form NAD. Uses ammonia as a nitrogen source. This chain is NH(3)-dependent NAD(+) synthetase, found in Rhodococcus erythropolis (strain PR4 / NBRC 100887).